Here is a 401-residue protein sequence, read N- to C-terminus: GRIP domain-containing protein C119.12 (401 aa).

A coiled-coil region spans residues Asn7–Glu296. The GRIP domain occupies Asn315 to Gln366.

It localises to the golgi apparatus lumen. This Schizosaccharomyces pombe (strain 972 / ATCC 24843) (Fission yeast) protein is GRIP domain-containing protein C119.12.